Consider the following 254-residue polypeptide: Ribonuclease PH (254 aa).

Phosphate-binding positions include R86 and 124–126 (GTR).

The protein belongs to the RNase PH family. As to quaternary structure, homohexameric ring arranged as a trimer of dimers.

It catalyses the reaction tRNA(n+1) + phosphate = tRNA(n) + a ribonucleoside 5'-diphosphate. Phosphorolytic 3'-5' exoribonuclease that plays an important role in tRNA 3'-end maturation. Removes nucleotide residues following the 3'-CCA terminus of tRNAs; can also add nucleotides to the ends of RNA molecules by using nucleoside diphosphates as substrates, but this may not be physiologically important. Probably plays a role in initiation of 16S rRNA degradation (leading to ribosome degradation) during starvation. This Carboxydothermus hydrogenoformans (strain ATCC BAA-161 / DSM 6008 / Z-2901) protein is Ribonuclease PH.